Reading from the N-terminus, the 447-residue chain is Membrane metalloprotease ARASP, chloroplastic (447 aa).

The transit peptide at methionine 1–arginine 73 directs the protein to the chloroplast. Histidine 102 is a Zn(2+) binding site. Residue glutamate 103 is part of the active site. Residue histidine 106 coordinates Zn(2+). Residues serine 177–valine 197 traverse the membrane as a helical segment. Residues valine 202–serine 244 form the PDZ domain. 2 helical membrane passes run leucine 379–leucine 399 and valine 413–isoleucine 433.

The protein belongs to the peptidase M50A family. Zn(2+) serves as cofactor. As to expression, expressed in green seedlings and cotyledons. Low levels of expression in roots, siliques and seeds.

Its subcellular location is the plastid. It localises to the chloroplast inner membrane. Functionally, metalloprotease essential for chloroplast and plant development. May be involved in regulated intramembrane proteolysis (RIP). The protein is Membrane metalloprotease ARASP, chloroplastic of Arabidopsis thaliana (Mouse-ear cress).